Reading from the N-terminus, the 452-residue chain is Phosphoglucosamine mutase (452 aa).

The active-site Phosphoserine intermediate is Ser108. Residues Ser108, Asp247, Asp249, and Asp251 each contribute to the Mg(2+) site. The residue at position 108 (Ser108) is a Phosphoserine.

It belongs to the phosphohexose mutase family. Mg(2+) serves as cofactor. Activated by phosphorylation.

The catalysed reaction is alpha-D-glucosamine 1-phosphate = D-glucosamine 6-phosphate. Its function is as follows. Catalyzes the conversion of glucosamine-6-phosphate to glucosamine-1-phosphate. In Paraburkholderia phytofirmans (strain DSM 17436 / LMG 22146 / PsJN) (Burkholderia phytofirmans), this protein is Phosphoglucosamine mutase.